The chain runs to 92 residues: UPF0223 protein SGO_1052 (92 aa).

The protein belongs to the UPF0223 family.

The sequence is that of UPF0223 protein SGO_1052 from Streptococcus gordonii (strain Challis / ATCC 35105 / BCRC 15272 / CH1 / DL1 / V288).